A 580-amino-acid chain; its full sequence is Frizzled-10-B (580 aa).

Positions 1-20 are cleaved as a signal peptide; the sequence is MEPRVVTALLLSLAAALCSG. The Extracellular portion of the chain corresponds to 21 to 224; sequence ISSINPDRSG…DVYWSKNDKK (204 aa). In terms of domain architecture, FZ spans 29-150; it reads SGEGRCQAIE…NDPNYLCMEA (122 aa). 5 cysteine pairs are disulfide-bonded: Cys34/Cys95, Cys42/Cys88, Cys79/Cys117, Cys106/Cys147, and Cys110/Cys134. Asn48 carries N-linked (GlcNAc...) asparagine glycosylation. Asn153 carries N-linked (GlcNAc...) asparagine glycosylation. Residues 173-194 form a disordered region; the sequence is RPNSGHEMYPKDPKGRSSCENS. Residues 180-189 are compositionally biased toward basic and acidic residues; it reads MYPKDPKGRS. Residues 225 to 245 form a helical membrane-spanning segment; the sequence is FAFIWIAIWSLLCFFSSAFTV. Residues 246–261 are Cytoplasmic-facing; it reads LTFLVDPLRFKYPERP. Residues 262-282 traverse the membrane as a helical segment; it reads IIFLSMCYCVYSVGYIIRLFA. The Extracellular segment spans residues 283-309; that stretch reads GADSIACDRDSGQLYVIQEGLESTGCT. Residues 310 to 330 traverse the membrane as a helical segment; the sequence is IVFLILYYFGMASSLWWVILT. At 331 to 350 the chain is on the cytoplasmic side; that stretch reads LTWFLAAGKKWGHEAIEANS. Residues 351-371 traverse the membrane as a helical segment; that stretch reads SYFHLAAWAIPAVKTIMILVM. The Extracellular portion of the chain corresponds to 372–392; that stretch reads RRVAGDELTGVCYVGSMDVNA. A helical transmembrane segment spans residues 393–413; the sequence is LTGFVLIPLACYLIIGTSFIL. Residues 414–442 lie on the Cytoplasmic side of the membrane; the sequence is SGFVALFHIRRVMKTGGENTDKLEKLMVR. A helical membrane pass occupies residues 443–463; sequence IGVFSVLYTVPATCVIACYFY. Topologically, residues 464-501 are extracellular; sequence ERLNMDFWKILATQDKCKMDSQTKTLDCTMTSSIPAVE. Residues 502–522 traverse the membrane as a helical segment; the sequence is IFMVKIFMLLVVGITSGMWIW. The Cytoplasmic segment spans residues 523–580; that stretch reads TSKTVQSWQNVFSKSLKKRNRNKPASVITSAGIYKKPQQPPKIHHGKYESALRSPTCV. The short motif at 525–530 is the Lys-Thr-X-X-X-Trp motif, mediates interaction with the PDZ domain of Dvl family members element; it reads KTVQSW. Residues 558–580 form a disordered region; the sequence is KPQQPPKIHHGKYESALRSPTCV. The PDZ-binding motif lies at 578-580; that stretch reads TCV.

This sequence belongs to the G-protein coupled receptor Fz/Smo family. In terms of tissue distribution, expressed in liver, lung, brain, testis, heart and ovary.

The protein resides in the cell membrane. In terms of biological role, receptor for Wnt proteins. Most of frizzled receptors are coupled to the beta-catenin canonical signaling pathway, which leads to the activation of disheveled proteins, inhibition of GSK-3 kinase, nuclear accumulation of beta-catenin and activation of Wnt target genes. A second signaling pathway involving PKC and calcium fluxes has been seen for some family members, but it is not yet clear if it represents a distinct pathway or if it can be integrated in the canonical pathway, as PKC seems to be required for Wnt-mediated inactivation of GSK-3 kinase. Both pathways seem to involve interactions with G-proteins. May be involved in transduction and intercellular transmission of polarity information during tissue morphogenesis and/or in differentiated tissues. Activated by Wnt8. Could have an antagonizing activity in the morphogenesis during development. The polypeptide is Frizzled-10-B (fzd10-b) (Xenopus laevis (African clawed frog)).